The chain runs to 371 residues: Cytochrome b (371 aa).

4 helical membrane passes run 32 to 52 (VGFSLGFFICMQIICGVCLAW), 76 to 98 (FVIRSTHICFTSLLFFLLYVHIF), 113 to 133 (VWAVGFIIYIFIVVIGFIGYV), and 179 to 199 (LHVLHVLLPFVLILVIFMHLF). His82 and His96 together coordinate heme b. The heme b site is built by His183 and His197. His202 is a binding site for a ubiquinone. 4 helical membrane passes run 227 to 247 (FYLRDMFLAFLILFYVVYFIF), 296 to 316 (LMVILLFSLFLFILNCILWFV), 329 to 349 (LILFYSIFMSGFLALYVILAY), and 350 to 370 (PIWMELQFWVLLLFMLVVCRL).

The protein belongs to the cytochrome b family. The main subunits of complex b-c1 are: cytochrome b, cytochrome c1 and the Rieske protein. Requires heme b as cofactor.

The protein resides in the mitochondrion inner membrane. Component of the ubiquinol-cytochrome c reductase complex (complex III or cytochrome b-c1 complex) that is part of the mitochondrial respiratory chain. The b-c1 complex mediates electron transfer from ubiquinol to cytochrome c. Contributes to the generation of a proton gradient across the mitochondrial membrane that is then used for ATP synthesis. The sequence is that of Cytochrome b (MT-CYB) from Leishmania tarentolae (Sauroleishmania tarentolae).